Reading from the N-terminus, the 150-residue chain is Placenta-specific protein 4 (150 aa).

Expressed in placental syncytiotrophoblast and choriocarcinoma cells.

The sequence is that of Placenta-specific protein 4 (PLAC4) from Homo sapiens (Human).